Reading from the N-terminus, the 74-residue chain is Imcroporin (74 aa).

Residues methionine 1–alanine 22 form the signal peptide. Residue lysine 39 is modified to Lysine amide; partial. The propeptide occupies glutamine 45–tyrosine 74.

Belongs to the non-disulfide-bridged peptide (NDBP) superfamily. Short antimicrobial peptide (group 4) family. Expressed by the venom gland.

The protein resides in the secreted. Its subcellular location is the target cell membrane. Functionally, has potent antibacterial activity against Gram-positive bacteria M.luteus, B.thuringiensis, S.aureus and B.subtilis, but not Gram-negative bacteria. Shows a weak cytotoxicity effect against mammalian cell lines and relatively low hemolytic activity against human erythrocytes. The chain is Imcroporin from Isometrus maculatus (Lesser brown scorpion).